Reading from the N-terminus, the 334-residue chain is Ferredoxin--NADP reductase (334 aa).

FAD contacts are provided by D33, Q41, Y46, A86, F120, D286, and T327.

Belongs to the ferredoxin--NADP reductase type 2 family. In terms of assembly, homodimer. It depends on FAD as a cofactor.

The enzyme catalyses 2 reduced [2Fe-2S]-[ferredoxin] + NADP(+) + H(+) = 2 oxidized [2Fe-2S]-[ferredoxin] + NADPH. This is Ferredoxin--NADP reductase from Rickettsia typhi (strain ATCC VR-144 / Wilmington).